The chain runs to 312 residues: DDRGK domain-containing protein 1 (312 aa).

Residues 1 to 2 (ME) are Lumenal-facing. A helical membrane pass occupies residues 3–23 (LIILVGIATALLVVIITLYLL). Topologically, residues 24-312 (QKKNAAPETK…ISAGGEEASS (289 aa)) are cytoplasmic. The segment covering 59-79 (NQRNRLRQNAPAAPAGQVAPA) has biased composition (low complexity). The disordered stretch occupies residues 59–162 (NQRNRLRQNA…RKHQEDLEAE (104 aa)). A compositionally biased stretch (basic and acidic residues) spans 110-162 (LDEKMGAKKRAKMEAKEQKRLQREQELHDREQRKVKEAKEEAERKHQEDLEAE).

The protein belongs to the DDRGK1 family. In terms of assembly, interacts with Atg9; the interaction is transient.

The protein resides in the endoplasmic reticulum membrane. In terms of biological role, substrate adapter for ufmylation, the covalent attachment of the ubiquitin-like modifier UFM1 to substrate proteins. Required for ufmylation of Atg9; protects the nervous system during aging, possibly by stabilizing Atg9 and supporting its function. In Drosophila yakuba (Fruit fly), this protein is DDRGK domain-containing protein 1.